We begin with the raw amino-acid sequence, 811 residues long: U-box domain-containing protein 43 (811 aa).

Residues Asn-24–Leu-103 form the U-box domain. ARM repeat units follow at residues Arg-136–Glu-175, Glu-178–Lys-217, Ala-220–Arg-261, Glu-263–Leu-302, Asn-303–Ser-342, Glu-344–Asn-388, Gly-399–Ser-438, Ile-444–Pro-484, and Glu-489–Glu-528.

It catalyses the reaction S-ubiquitinyl-[E2 ubiquitin-conjugating enzyme]-L-cysteine + [acceptor protein]-L-lysine = [E2 ubiquitin-conjugating enzyme]-L-cysteine + N(6)-ubiquitinyl-[acceptor protein]-L-lysine.. It participates in protein modification; protein ubiquitination. Its function is as follows. Functions as an E3 ubiquitin ligase. This Arabidopsis thaliana (Mouse-ear cress) protein is U-box domain-containing protein 43 (PUB43).